The primary structure comprises 234 residues: Segregation and condensation protein A (234 aa).

This sequence belongs to the ScpA family. In terms of assembly, component of a cohesin-like complex composed of ScpA, ScpB and the Smc homodimer, in which ScpA and ScpB bind to the head domain of Smc. The presence of the three proteins is required for the association of the complex with DNA.

The protein localises to the cytoplasm. Functionally, participates in chromosomal partition during cell division. May act via the formation of a condensin-like complex containing Smc and ScpB that pull DNA away from mid-cell into both cell halves. The sequence is that of Segregation and condensation protein A from Streptococcus pyogenes serotype M6 (strain ATCC BAA-946 / MGAS10394).